The sequence spans 542 residues: Chaperonin GroEL 2 (542 aa).

Residues 30–33 (TLGP), Lys-51, 87–91 (DGTTT), Gly-415, and Asp-496 contribute to the ATP site.

Belongs to the chaperonin (HSP60) family. Forms a cylinder of 14 subunits composed of two heptameric rings stacked back-to-back. Interacts with the co-chaperonin GroES.

Its subcellular location is the cytoplasm. It carries out the reaction ATP + H2O + a folded polypeptide = ADP + phosphate + an unfolded polypeptide.. In terms of biological role, together with its co-chaperonin GroES, plays an essential role in assisting protein folding. The GroEL-GroES system forms a nano-cage that allows encapsulation of the non-native substrate proteins and provides a physical environment optimized to promote and accelerate protein folding. The chain is Chaperonin GroEL 2 from Mesorhizobium japonicum (strain LMG 29417 / CECT 9101 / MAFF 303099) (Mesorhizobium loti (strain MAFF 303099)).